The sequence spans 191 residues: Thioredoxin F-type, chloroplastic (191 aa).

In terms of domain architecture, Thioredoxin spans 68–190; it reads KASLETAVGA…LVAAIEAARS (123 aa). Active-site nucleophile residues include cysteine 115 and cysteine 118. Cysteines 115 and 118 form a disulfide.

The protein belongs to the thioredoxin family. Plant F-type subfamily. As to quaternary structure, forms a complex with heterodimeric ferredoxin-thioredoxin reductase (FTR) and ferredoxin.

The protein resides in the plastid. Its subcellular location is the chloroplast. In terms of biological role, participates in various redox reactions through the reversible oxidation of the active center dithiol to a disulfide. The F form is known to activate a number of enzymes of the photosynthetic carbon cycle. This chain is Thioredoxin F-type, chloroplastic, found in Mesembryanthemum crystallinum (Common ice plant).